A 406-amino-acid chain; its full sequence is Endoplasmic reticulum resident protein 44 (406 aa).

Positions 1–29 (MHPAVFLSLPDLRCSLLLLVTWVFTPVTT) are cleaved as a signal peptide. The region spanning 30 to 138 (EITSLDTENI…VKALADYIRQ (109 aa)) is the Thioredoxin domain. Intrachain disulfides connect Cys189-Cys241 and Cys301-Cys318. Residues 236–285 (WIQDKCVPLVREITFENGEELTEEGLPFLILFHMKEDTESLEIFQNEVAR) are interaction with ITPR1. A disordered region spans residues 360 to 387 (FHHGPDPTDTAPGEQAQDVASSPPESSF). Over residues 377 to 387 (DVASSPPESSF) the composition is skewed to polar residues. The Prevents secretion from ER motif lies at 403 to 406 (RDEL).

As to quaternary structure, forms mixed disulfides with both ERO1A and ERO1B and cargo folding intermediates; the interactions with ERO1A and ERO1B result in their retention in the endoplasmic reticulum. Directly interacts with ITPR1 in a pH-, redox state- and calcium-dependent manner, but not with ITPR2 or ITPR3. The strength of this interaction inversely correlates with calcium concentration.

The protein resides in the endoplasmic reticulum lumen. Functionally, mediates thiol-dependent retention in the early secretory pathway, forming mixed disulfides with substrate proteins through its conserved CRFS motif. Inhibits the calcium channel activity of ITPR1. May have a role in the control of oxidative protein folding in the endoplasmic reticulum. Required to retain ERO1A and ERO1B in the endoplasmic reticulum. In Homo sapiens (Human), this protein is Endoplasmic reticulum resident protein 44 (ERP44).